We begin with the raw amino-acid sequence, 546 residues long: ATP synthase F(1) complex catalytic subunit beta, mitochondrial (546 aa).

The transit peptide at 1–45 directs the protein to the mitochondrion; that stretch reads MLGFVGRVAATSASGALRGLGPSPLPQVKVLLRASPAALQSARDY. 3 positions are modified to N6-acetyllysine; alternate: Lys-123, Lys-132, and Lys-160. An N6-succinyllysine; alternate mark is found at Lys-123, Lys-132, and Lys-160. Residue Lys-197 is modified to N6-acetyllysine. ADP is bound by residues Gly-208, Val-209, Gly-210, Lys-211, Thr-212, and Val-213. Residue Gly-208 participates in ATP binding. Phosphate-binding residues include Gly-208, Val-209, Gly-210, Lys-211, and Thr-212. Positions 210, 211, 212, and 213 each coordinate ATP. Thr-212 provides a ligand contact to Mg(2+). Glu-237 provides a ligand contact to Mg(2+). ATP is bound at residue Arg-238. Lys-258 and Lys-263 each carry N6-acetyllysine; alternate. An N6-succinyllysine; alternate mark is found at Lys-258 and Lys-263. A Phosphothreonine modification is found at Thr-311. Lys-425 bears the N6-acetyllysine mark. Ser-432 bears the Phosphoserine mark. An N6-acetyllysine mark is found at Lys-479 and Lys-484. Lys-521 is modified (N6-acetyllysine; alternate). Lys-521 carries the post-translational modification N6-succinyllysine; alternate. The segment at 521–546 is disordered; sequence KLAEEHSATQTSPSPKGAAAXXXRVV.

This sequence belongs to the ATPase alpha/beta chains family. Homotrimer. Component of the ATP synthase complex composed at least of ATP5F1A/subunit alpha, ATP5F1B/subunit beta, ATP5MC1/subunit c (homooctomer), MT-ATP6/subunit a, MT-ATP8/subunit 8, ATP5ME/subunit e, ATP5MF/subunit f, ATP5MG/subunit g, ATP5MK/subunit k, ATP5MJ/subunit j, ATP5F1C/subunit gamma, ATP5F1D/subunit delta, ATP5F1E/subunit epsilon, ATP5PF/subunit F6, ATP5PB/subunit b, ATP5PD/subunit d, ATP5PO/subunit OSCP. ATP synthase complex consists of a soluble F(1) head domain (subunits alpha(3) and beta(3)) - the catalytic core - and a membrane F(0) domain - the membrane proton channel (subunits c, a, 8, e, f, g, k and j). These two domains are linked by a central stalk (subunits gamma, delta, and epsilon) rotating inside the F1 region and a stationary peripheral stalk (subunits F6, b, d, and OSCP). Interacts with PPIF. Interacts with BCL2L1 isoform BCL-X(L); the interaction mediates the association of BCL2L1 isoform BCL-X(L) with the mitochondrial membrane F(1)F(0) ATP synthase and enhances neurons metabolic efficiency. Interacts with CLN5 and PPT1. Interacts with S100A1; this interaction increases F1-ATPase activity. Interacts with MTLN. Interacts with TTC5/STRAP; the interaction results in decreased mitochondrial ATP production.

The protein localises to the mitochondrion inner membrane. The enzyme catalyses ATP + H2O + 4 H(+)(in) = ADP + phosphate + 5 H(+)(out). In terms of biological role, catalytic subunit beta, of the mitochondrial membrane ATP synthase complex (F(1)F(0) ATP synthase or Complex V) that produces ATP from ADP in the presence of a proton gradient across the membrane which is generated by electron transport complexes of the respiratory chain. ATP synthase complex consist of a soluble F(1) head domain - the catalytic core - and a membrane F(1) domain - the membrane proton channel. These two domains are linked by a central stalk rotating inside the F(1) region and a stationary peripheral stalk. During catalysis, ATP synthesis in the catalytic domain of F(1) is coupled via a rotary mechanism of the central stalk subunits to proton translocation. In vivo, can only synthesize ATP although its ATP hydrolase activity can be activated artificially in vitro. With the subunit alpha (ATP5F1A), forms the catalytic core in the F(1) domain. The chain is ATP synthase F(1) complex catalytic subunit beta, mitochondrial from Canis lupus familiaris (Dog).